Reading from the N-terminus, the 336-residue chain is 4-hydroxy-3-methylbut-2-enyl diphosphate reductase (336 aa).

Cys-37 lines the [4Fe-4S] cluster pocket. (2E)-4-hydroxy-3-methylbut-2-enyl diphosphate is bound by residues His-66 and His-99. Residues His-66 and His-99 each contribute to the dimethylallyl diphosphate site. Residues His-66 and His-99 each contribute to the isopentenyl diphosphate site. Cys-121 is a [4Fe-4S] cluster binding site. A (2E)-4-hydroxy-3-methylbut-2-enyl diphosphate-binding site is contributed by His-149. Position 149 (His-149) interacts with dimethylallyl diphosphate. His-149 contributes to the isopentenyl diphosphate binding site. Glu-151 functions as the Proton donor in the catalytic mechanism. Position 189 (Thr-189) interacts with (2E)-4-hydroxy-3-methylbut-2-enyl diphosphate. Cys-219 contacts [4Fe-4S] cluster. The (2E)-4-hydroxy-3-methylbut-2-enyl diphosphate site is built by Ser-247, Ser-248, Asn-249, and Ser-292. Residues Ser-247, Ser-248, Asn-249, and Ser-292 each coordinate dimethylallyl diphosphate. Residues Ser-247, Ser-248, Asn-249, and Ser-292 each contribute to the isopentenyl diphosphate site.

The protein belongs to the IspH family. Requires [4Fe-4S] cluster as cofactor.

It catalyses the reaction isopentenyl diphosphate + 2 oxidized [2Fe-2S]-[ferredoxin] + H2O = (2E)-4-hydroxy-3-methylbut-2-enyl diphosphate + 2 reduced [2Fe-2S]-[ferredoxin] + 2 H(+). The catalysed reaction is dimethylallyl diphosphate + 2 oxidized [2Fe-2S]-[ferredoxin] + H2O = (2E)-4-hydroxy-3-methylbut-2-enyl diphosphate + 2 reduced [2Fe-2S]-[ferredoxin] + 2 H(+). It functions in the pathway isoprenoid biosynthesis; dimethylallyl diphosphate biosynthesis; dimethylallyl diphosphate from (2E)-4-hydroxy-3-methylbutenyl diphosphate: step 1/1. Its pathway is isoprenoid biosynthesis; isopentenyl diphosphate biosynthesis via DXP pathway; isopentenyl diphosphate from 1-deoxy-D-xylulose 5-phosphate: step 6/6. In terms of biological role, catalyzes the conversion of 1-hydroxy-2-methyl-2-(E)-butenyl 4-diphosphate (HMBPP) into a mixture of isopentenyl diphosphate (IPP) and dimethylallyl diphosphate (DMAPP). Acts in the terminal step of the DOXP/MEP pathway for isoprenoid precursor biosynthesis. The polypeptide is 4-hydroxy-3-methylbut-2-enyl diphosphate reductase (Nocardia farcinica (strain IFM 10152)).